The chain runs to 960 residues: Endoplasmic reticulum aminopeptidase 2 (960 aa).

Topologically, residues 1–20 (MFHSSAMVNSHRKPMFNIHR) are cytoplasmic. Residues 21–40 (GFYCLTAILPQICICSQFSV) traverse the membrane as a helical; Signal-anchor for type II membrane protein segment. The Lumenal segment spans residues 41–960 (PSSYHFTEDP…TLRTWLMVNT (920 aa)). N-linked (GlcNAc...) asparagine glycans are attached at residues Asn85 and Asn119. Substrate is bound at residue Glu200. Asn219 carries N-linked (GlcNAc...) asparagine glycosylation. A substrate-binding site is contributed by 334–338 (GAMEN). Position 370 (His370) interacts with Zn(2+). The active-site Proton acceptor is Glu371. Residues His374 and Glu393 each coordinate Zn(2+). Residue Asn405 is glycosylated (N-linked (GlcNAc...) asparagine). Cys421 and Cys460 form a disulfide bridge. An N-linked (GlcNAc...) asparagine glycan is attached at Asn650. Residues Cys759 and Cys766 are joined by a disulfide bond.

This sequence belongs to the peptidase M1 family. As to quaternary structure, heterodimer with ERAP1. Requires Zn(2+) as cofactor. Post-translationally, N-glycosylated. In terms of tissue distribution, ubiquitously expressed. Highly expressed in spleen and leukocytes.

The protein localises to the endoplasmic reticulum membrane. Its function is as follows. Aminopeptidase that plays a central role in peptide trimming, a step required for the generation of most HLA class I-binding peptides. Peptide trimming is essential to customize longer precursor peptides to fit them to the correct length required for presentation on MHC class I molecules. Preferentially hydrolyzes the basic residues Arg and Lys. The polypeptide is Endoplasmic reticulum aminopeptidase 2 (ERAP2) (Homo sapiens (Human)).